Here is a 618-residue protein sequence, read N- to C-terminus: Sodium/iodide cotransporter (618 aa).

The Extracellular segment spans residues 1-14 (MEGAEAGARATFGP). The chain crosses the membrane as a helical span at residues 15 to 31 (WDYGVFATMLLVSTGIG). Topologically, residues 32-56 (LWVGLARGGQRSADDFFTGGRQLAA) are cytoplasmic. Residues 57-80 (VPVGLSLAASFMSAVQVLGVPAEA) form a discontinuously helical membrane-spanning segment. Na(+) is bound by residues Ser69, Val71, and Gln72. Val76 contributes to the iodide binding site. Over 81–84 (ARYG) the chain is Extracellular. Residues 85–105 (LKFLWMCVGQLLNSLLTALLF) form a helical membrane-spanning segment. Met90 serves as a coordination point for iodide. The Cytoplasmic portion of the chain corresponds to 106 to 130 (LPIFYRLGLTSTYQYLELRFSRAVR). The chain crosses the membrane as a helical span at residues 131–157 (LCGTLQYLVATMLYTGIVIYAPALILN). Tyr144 is a Na(+) binding site. Over 158-163 (QVTGLD) the chain is Extracellular. The helical transmembrane segment at 164-181 (IWASLLSTGIICTLYTTV) threads the bilayer. At 182–189 (GGMKAVVW) the chain is on the cytoplasmic side. The chain crosses the membrane as a helical span at residues 190 to 208 (TDVFQVVVMLVGFWVILAR). The Extracellular segment spans residues 209-243 (GVMLMGGPWNVLSLAQNHSRINLMDFDPDPRSRYT). Residues 244–266 (FWTFVVGGSLVWLSMYGVNQAQV) form a discontinuously helical membrane-spanning segment. Trp255 is an iodide binding site. Met258 is a Na(+) binding site. Residues 267 to 278 (QRYVACHTERKA) are Cytoplasmic-facing. The helical transmembrane segment at 279 to 301 (KLALLVNQLGLFLIVASAACCGI) threads the bilayer. The Extracellular segment spans residues 302–335 (VMFVYYKDCDPLLTGRIAAPDQYMPLLVLDIFED). The chain crosses the membrane as a helical span at residues 336–363 (LPGVPGLFLACAYSGTLSTASTSINAMA). Residues 364–386 (AVTVEDLIKPRMPSLAPRKLVFI) lie on the Cytoplasmic side of the membrane. A helical transmembrane segment spans residues 387–408 (SKGLSFIYGSTCLTVAALSSLL). The Extracellular segment spans residues 409–411 (GGG). A helical transmembrane segment spans residues 412-437 (VLQGSFTVMGVISGPLLGAFTLGMLL). An iodide-binding site is contributed by Leu413. Na(+) is bound by residues Ser416 and Phe417. Phe417 is an iodide binding site. Residues 438-441 (PACN) are Cytoplasmic-facing. Residues 442 to 465 (TPGVLSGLTAGLAVSLWVAVGATL) form a helical membrane-spanning segment. Over 466–520 (YPPGEQTMGVLPTSAAGCTNASVLPSPPGAANTSRGIPSSGMDSGRPAFADTFYA) the chain is Extracellular. N-linked (GlcNAc...) asparagine glycosylation is found at Asn485 and Asn497. A helical membrane pass occupies residues 521-545 (VSYLYYGALGTLTTMLCGALISYLT). Topologically, residues 546 to 618 (GPTKRSSLGP…YLGHDVETNL (73 aa)) are cytoplasmic. Residue Ser551 is modified to Phosphoserine; by PKA. The segment covering 571-587 (PKEDTTTLEDSLVKGPE) has biased composition (basic and acidic residues). Residues 571–618 (PKEDTTTLEDSLVKGPEDIPAATKKPPGFRPEAETHPLYLGHDVETNL) are disordered.

This sequence belongs to the sodium:solute symporter (SSF) (TC 2.A.21) family. Monomer. Post-translationally, glycosylated.

It is found in the cell membrane. The protein resides in the cytoplasm. The enzyme catalyses iodide(out) + 2 Na(+)(out) = iodide(in) + 2 Na(+)(in). The catalysed reaction is chlorate(out) + 2 Na(+)(out) = chlorate(in) + 2 Na(+)(in). It carries out the reaction thiocyanate(out) + 2 Na(+)(out) = thiocyanate(in) + 2 Na(+)(in). It catalyses the reaction nitrate(out) + 2 Na(+)(out) = nitrate(in) + 2 Na(+)(in). The enzyme catalyses selenocyanate(out) + 2 Na(+)(out) = selenocyanate(in) + 2 Na(+)(in). Perchlorate inhibits iodide transport activity. Oxyanions inhibit iodide transport activity by blocking the binding sites for iodide and one of the sodium ions. Sodium:iodide symporter that mediates the transport of iodide into the thyroid gland. Can also mediate the transport of chlorate, thiocynate, nitrate and selenocynate. This chain is Sodium/iodide cotransporter (Slc5a5), found in Mus musculus (Mouse).